The primary structure comprises 771 residues: Solute carrier family 7 member 14 (771 aa).

6 consecutive transmembrane segments (helical) span residues 58-78 (LISL…SGLV), 83-103 (AGPG…LSGV), 119-141 (AYTY…NLIL), 187-207 (YPDL…ALGV), 216-236 (VLNV…LFFI), and 251-271 (WSGV…FDII). N282 carries an N-linked (GlcNAc...) asparagine glycan. Transmembrane regions (helical) follow at residues 291 to 311 (ASLV…TLMV), 336 to 356 (FVVA…SLFP), 384 to 404 (PVVA…LVSL), and 407 to 427 (LIEM…VCVL). Phosphoserine occurs at positions 465, 468, 475, and 488. 4 helical membrane passes run 565 to 585 (VTIC…FIIF), 596 to 616 (WAIL…FVIL), 628 to 648 (MAPC…YLML), and 655 to 675 (WIRF…YGIW). N-linked (GlcNAc...) asparagine glycosylation is present at N676. A disordered region spans residues 735 to 771 (SDAKANSRTSSKAKSKSKHKQNSEALIANDELDCSPE). The span at 745–754 (SKAKSKSKHK) shows a compositional bias: basic residues. A phosphoserine mark is found at S757 and S769.

It belongs to the amino acid-polyamine-organocation (APC) superfamily. Expressed in retina, brain and spinal cord. In the retina, expressed in the inner nuclear layer and photoreceptor layer (at protein level). Expressed in liver, spleen, lung, kidney intestine and brain (at protein level).

The protein resides in the lysosome membrane. It catalyses the reaction 4-aminobutanoate(in) = 4-aminobutanoate(out). In terms of biological role, imports 4-aminobutanoate (GABA) into lysosomes. May act as a GABA sensor that regulates mTORC2-dependent INS signaling and gluconeogenesis. The transport mechanism and substrate selectivity remain to be elucidated. In Mus musculus (Mouse), this protein is Solute carrier family 7 member 14.